Here is a 396-residue protein sequence, read N- to C-terminus: Ribosomal RNA large subunit methyltransferase I (396 aa).

Residues 2–81 (TVRLILAKGR…EVIDCAFFIR (80 aa)) form the PUA domain.

Belongs to the methyltransferase superfamily. RlmI family.

It is found in the cytoplasm. It carries out the reaction cytidine(1962) in 23S rRNA + S-adenosyl-L-methionine = 5-methylcytidine(1962) in 23S rRNA + S-adenosyl-L-homocysteine + H(+). Specifically methylates the cytosine at position 1962 (m5C1962) of 23S rRNA. This chain is Ribosomal RNA large subunit methyltransferase I, found in Yersinia pestis bv. Antiqua (strain Antiqua).